The primary structure comprises 59 residues: Large ribosomal subunit protein uL30 (59 aa).

Belongs to the universal ribosomal protein uL30 family. As to quaternary structure, part of the 50S ribosomal subunit.

The polypeptide is Large ribosomal subunit protein uL30 (Pelotomaculum thermopropionicum (strain DSM 13744 / JCM 10971 / SI)).